A 320-amino-acid chain; its full sequence is Zinc finger protein 330 (320 aa).

The segment at 1–23 (MPKKKTGARKKAENRREREKQLR) is disordered. The Nuclear localization signal motif lies at 3–11 (KKKTGARKK). Positions 10–22 (KKAENRREREKQL) are enriched in basic and acidic residues. 4 consecutive C4-type zinc fingers follow at residues 42-58 (CDKCQRRQKNRAFCYFC), 67-104 (CAQCGKTKCMMKSSDCVIKHAGVYSTGLAMVGAICDFC), 129-149 (CVECERGVWDHGGRIFSCSFC), and 175-189 (CVSCNRLGQHSCLRC). The disordered stretch occupies residues 206 to 320 (EKGKQPPCPK…GYAHYEEQEN (115 aa)). Positions 216-225 (CGHETQETKD) are enriched in basic and acidic residues. Residues 269 to 285 (DEEEDEYEAEDDEEEED) show a composition bias toward acidic residues. At S291 the chain carries Phosphoserine.

The protein belongs to the NOA36 family. As to expression, widely expressed. Higher expression seen in heart and skeletal muscle.

It localises to the nucleus. The protein localises to the nucleolus. It is found in the chromosome. Its subcellular location is the centromere. In Homo sapiens (Human), this protein is Zinc finger protein 330 (ZNF330).